A 646-amino-acid chain; its full sequence is Protein kinase YegI (646 aa).

Positions 13 to 300 (VTPGRELGKG…KAWVAALDLL (288 aa)) constitute a Protein kinase domain. Residues 19–27 (LGKGGEGAV) and Lys39 each bind ATP. Residue Asp141 is the Proton acceptor of the active site.

Autophosphorylated.

Probable serine/threonine kinase. The sequence is that of Protein kinase YegI (yegI) from Escherichia coli O157:H7.